Here is a 244-residue protein sequence, read N- to C-terminus: Mediator of RNA polymerase II transcription subunit 8 (244 aa).

A coiled-coil region spans residues 6–30 (QEQLKTLEQSRQRLVQLTRSLASLI).

Belongs to the Mediator complex subunit 8 family. In terms of assembly, component of the Mediator complex.

It is found in the nucleus. Component of the Mediator complex, a coactivator involved in the regulated transcription of nearly all RNA polymerase II-dependent genes. Mediator functions as a bridge to convey information from gene-specific regulatory proteins to the basal RNA polymerase II transcription machinery. Mediator is recruited to promoters by direct interactions with regulatory proteins and serves as a scaffold for the assembly of a functional preinitiation complex with RNA polymerase II and the general transcription factors. This is Mediator of RNA polymerase II transcription subunit 8 (med8) from Aspergillus oryzae (strain ATCC 42149 / RIB 40) (Yellow koji mold).